A 122-amino-acid chain; its full sequence is Chorismate mutase AroH (122 aa).

The 119-residue stretch at 2–120 folds into the Chorismate mutase aroH-type domain; sequence VRGIRGAITV…AVRLRPDLES (119 aa). Prephenate contacts are provided by Arg-6, Arg-89, and Tyr-107.

Homotrimer.

The protein localises to the cytoplasm. The enzyme catalyses chorismate = prephenate. The protein operates within metabolic intermediate biosynthesis; prephenate biosynthesis; prephenate from chorismate: step 1/1. Inhibited by 40% with 500 uM tyrosine, and a tyrosine concentration as high as 5 mM reduced activity to 5%. Catalyzes the Claisen rearrangement of chorismate to prephenate. Probably involved in the aromatic amino acid biosynthesis. The protein is Chorismate mutase AroH of Thermus thermophilus.